The following is a 162-amino-acid chain: MTAIQHFFKTFFLTELLKGLALTGRYTFKRKFTVQFPEEKTPISPRFRGLHALRRYENGEERCIACKLCEAVCPALAITIESETRADNTRRTTRYDIDLTKCIFCGFCEESCPVDSIVETQILEYHGEKRGDLYFTKEMLLAVGDRYEKDIAAAKAADAPYR.

4Fe-4S ferredoxin-type domains are found at residues 54–83 (RRYENGEERCIACKLCEAVCPALAITIESE) and 93–122 (TRYDIDLTKCIFCGFCEESCPVDSIVETQI). [4Fe-4S] cluster-binding residues include cysteine 63, cysteine 66, cysteine 69, cysteine 73, cysteine 102, cysteine 105, cysteine 108, and cysteine 112.

Belongs to the complex I 23 kDa subunit family. As to quaternary structure, NDH-1 is composed of 14 different subunits. Subunits NuoA, H, J, K, L, M, N constitute the membrane sector of the complex. It depends on [4Fe-4S] cluster as a cofactor.

Its subcellular location is the cell inner membrane. The catalysed reaction is a quinone + NADH + 5 H(+)(in) = a quinol + NAD(+) + 4 H(+)(out). In terms of biological role, NDH-1 shuttles electrons from NADH, via FMN and iron-sulfur (Fe-S) centers, to quinones in the respiratory chain. The immediate electron acceptor for the enzyme in this species is believed to be ubiquinone. Couples the redox reaction to proton translocation (for every two electrons transferred, four hydrogen ions are translocated across the cytoplasmic membrane), and thus conserves the redox energy in a proton gradient. The polypeptide is NADH-quinone oxidoreductase subunit I (Burkholderia cenocepacia (strain HI2424)).